The following is a 331-amino-acid chain: Phospholipase A2 inhibitor (331 aa).

Residues 1–23 (MKSSVPSLLIACLVMSLNSYTQQ) form the signal peptide. The N-linked (GlcNAc...) asparagine glycan is linked to Asn35. 8 LRR repeats span residues 78–101 (LPNLQELHLSNNRLKTLPSGLFRN), 103–125 (PQLHTLDLSTNHLEDLPPEIFTN), 127–149 (SSLILLPLSENQLAELHPSWFQT), 150–173 (LGELRILGLDHNQVKEIPISCFDK), 175–197 (KKLTSLDLSFNLLRRLAPEMFSG), 199–221 (DNLEKLILESNPIQCIVGRTFHW), 223–244 (PKLTVLSLKNSSLTNIMGFFQP), and 245–268 (LEQLELLDLSDNELTTMEPPVYKT). Asn125 is a glycosylation site (N-linked (GlcNAc...) asparagine). Asn232 carries N-linked (GlcNAc...) asparagine glycosylation. Asn271 carries N-linked (GlcNAc...) asparagine glycosylation. Positions 279–330 (NPWACDCRLDNLLTWVNEHNIHLYSKEEIVCASPKHFKGECATSLHKSQICP) constitute an LRRCT domain.

Homotrimer.

The protein resides in the secreted. Inhibits the enzymatic activity of the basic phospholipase A2 (PLA2). The protein is Phospholipase A2 inhibitor of Gloydius brevicaudus siniticus (Chinese mamushi).